A 169-amino-acid polypeptide reads, in one-letter code: Photosystem I assembly protein Ycf3 (169 aa).

TPR repeat units follow at residues 35 to 68 (AFSYYRDGMSAQSEGEYAEALQNYYEAMRLEIDP), 72 to 105 (SYILYNIGLIHTSNGQHTKALEYYLQALERNPAL), and 120 to 153 (GEQAIQQGDPENAEAWFDQAADYWKQGIALAPSN).

It belongs to the Ycf3 family.

It is found in the plastid. It localises to the chloroplast thylakoid membrane. Its function is as follows. Essential for the assembly of the photosystem I (PSI) complex. May act as a chaperone-like factor to guide the assembly of the PSI subunits. This chain is Photosystem I assembly protein Ycf3, found in Chaetosphaeridium globosum (Charophycean green alga).